The sequence spans 178 residues: Protein RICE FLOWERING LOCUS T 1 (178 aa).

This sequence belongs to the phosphatidylethanolamine-binding protein family. Interacts with FTIP1. In terms of tissue distribution, expressed in leaf vascular tissues. Specifically expressed in the phloem including companion cells.

It localises to the cytoplasm. The protein resides in the nucleus. Its subcellular location is the endoplasmic reticulum. Functionally, probable mobile flower-promoting signal (florigen) that moves from the leaf to the shoot apical meristem (SAM) and induces flowering. Promotes the transition from vegetative growth to flowering under long day (LD) conditions. Acts upstream of MADS14 and MADS15. May also participate in the promotion of flowering under short day (SD) conditions. The protein is Protein RICE FLOWERING LOCUS T 1 of Oryza sativa subsp. japonica (Rice).